Consider the following 917-residue polypeptide: Spermatogenesis-associated protein 31D4 (917 aa).

Residues 29 to 49 form a helical membrane-spanning segment; sequence FICLSGLGLFILYLFYMVLTL. Disordered stretches follow at residues 55–80, 152–195, and 773–798; these read EKNN…KDRK, SVSP…PPPL, and SQET…RSNS. Positions 63 to 74 are enriched in basic residues; sequence HQGRARRKRKSV. Low complexity predominate over residues 152–163; the sequence is SVSPLASSASGA. Residues 164 to 177 are compositionally biased toward polar residues; that stretch reads ESSFTLASTPSATT. Residues 782–798 are compositionally biased toward basic and acidic residues; it reads LLHDPETSSDEDLRSNS.

Belongs to the SPATA31 family.

It localises to the membrane. Its function is as follows. May play a role in spermatogenesis. This Homo sapiens (Human) protein is Spermatogenesis-associated protein 31D4 (SPATA31D4).